We begin with the raw amino-acid sequence, 414 residues long: Glutamyl-tRNA reductase (414 aa).

Substrate contacts are provided by residues 49-52 (TCNR), Ser108, 113-115 (EPQ), and Gln119. Cys50 functions as the Nucleophile in the catalytic mechanism. Residue 188–193 (GAGQTG) coordinates NADP(+).

The protein belongs to the glutamyl-tRNA reductase family. Homodimer.

The enzyme catalyses (S)-4-amino-5-oxopentanoate + tRNA(Glu) + NADP(+) = L-glutamyl-tRNA(Glu) + NADPH + H(+). Its pathway is porphyrin-containing compound metabolism; protoporphyrin-IX biosynthesis; 5-aminolevulinate from L-glutamyl-tRNA(Glu): step 1/2. In terms of biological role, catalyzes the NADPH-dependent reduction of glutamyl-tRNA(Glu) to glutamate 1-semialdehyde (GSA). The polypeptide is Glutamyl-tRNA reductase (Francisella tularensis subsp. tularensis (strain WY96-3418)).